Here is a 655-residue protein sequence, read N- to C-terminus: Import motor subunit, mitochondrial (655 aa).

The N-terminal 23 residues, 1–23 (MLAAKNILNRSSLSSSFRIATRL), are a transit peptide targeting the mitochondrion. Threonine 330 bears the Phosphothreonine mark. A disordered region spans residues 629 to 655 (EQLYKNDSNNNNNNNNGNNAESDETKQ). The span at 637–647 (NNNNNNNNGNN) shows a compositional bias: low complexity.

Belongs to the heat shock protein 70 family. In terms of assembly, component of the PAM complex, at least composed of SSC1 (mtHsp70), MGE1, TIM44, PAM16/TIM16, PAM17 and PAM18/TIM14. In the complex, SSC1 interacts directly with PAM18 and TIM44. Interacts with NAP1. Component of endonuclease SceI (endo.SceI), which is a heterodimer of ENS2 and SSC1.

It localises to the mitochondrion matrix. It carries out the reaction ATP + H2O = ADP + phosphate + H(+). Essential component of the PAM complex, a complex required for the translocation of transit peptide-containing proteins from the inner membrane into the mitochondrial matrix in an ATP-dependent manner. Constitutes the ATP-driven core of the motor and binds the precursor preprotein. Required for the import of the processed frataxin homolog YFH1 into the mitochondrion. Its function is as follows. Acts as a non-catalytic component of endonuclease SceI (endo.SceI), which cleaves specifically at multiple sites on mitochondrial DNA and produces double-stranded breaks. SSC1 confers broader sequence specificity, greater stability, and higher activity on the catalytic subunit. The chain is Import motor subunit, mitochondrial from Saccharomyces cerevisiae (Baker's yeast).